Here is a 574-residue protein sequence, read N- to C-terminus: Splicing factor U2af large subunit A (574 aa).

The segment at methionine 1–glycine 180 is disordered. Residues proline 18–proline 41 are compositionally biased toward low complexity. The segment covering arginine 53–glycine 143 has biased composition (basic and acidic residues). A compositionally biased stretch (basic residues) spans histidine 144–lysine 172. RRM domains are found at residues arginine 238–aspartate 321, aspartate 358–glutamine 436, and glutamine 479–aspartate 565.

It belongs to the splicing factor SR family.

Its subcellular location is the nucleus. Its function is as follows. Necessary for the splicing of pre-mRNA. The chain is Splicing factor U2af large subunit A (U2AF65A) from Oryza sativa subsp. japonica (Rice).